The following is a 201-amino-acid chain: Large ribosomal subunit protein uL4 (201 aa).

A disordered region spans residues 43-69; the sequence is TKAQKGRSDVSGGGAKPWKQKGSGRAR.

It belongs to the universal ribosomal protein uL4 family. Part of the 50S ribosomal subunit.

One of the primary rRNA binding proteins, this protein initially binds near the 5'-end of the 23S rRNA. It is important during the early stages of 50S assembly. It makes multiple contacts with different domains of the 23S rRNA in the assembled 50S subunit and ribosome. In terms of biological role, forms part of the polypeptide exit tunnel. The chain is Large ribosomal subunit protein uL4 from Thioalkalivibrio sulfidiphilus (strain HL-EbGR7).